A 219-amino-acid polypeptide reads, in one-letter code: Ras-related protein Rab-3B (219 aa).

An N-acetylalanine modification is found at A2. S31, S32, V33, G34, K35, T36, S37, P49, and S53 together coordinate GTP. T36 contacts Mg(2+). The Switch 1 signature appears at 45-58 (DTFTPAFVSTVGID). Residues T54 and D77 each coordinate Mg(2+). The Switch 2 motif lies at 78-96 (TAGQERYRTITTAYYRGAM). A GTP-binding site is contributed by G80. A Phosphothreonine modification is found at T86. Positions 135, 136, 138, 166, and 167 each coordinate GTP. S188 and S190 each carry phosphoserine. Residues C217 and C219 are each lipidated (S-geranylgeranyl cysteine). Residue C219 is modified to Cysteine methyl ester.

The protein belongs to the small GTPase superfamily. Rab family. In terms of assembly, interacts with RIMS1, RIMS2, RPH3A and RPH3AL. The GTP-bound form interacts with GAS8/DRC4 (via coiled-coil domains). Interacts with GDI2, CHM and CHML; phosphorylation at Thr-86 disrupts these interactions. Interacts with MADD (via uDENN domain); the GTP-bound form is preferred for interaction. The cofactor is Mg(2+). Phosphorylation of Thr-86 in the switch II region by LRRK2 prevents the association of RAB regulatory proteins, including CHM, CHML and RAB GDP dissociation inhibitor GDI2.

The protein resides in the cell membrane. It is found in the golgi apparatus. It carries out the reaction GTP + H2O = GDP + phosphate + H(+). With respect to regulation, regulated by guanine nucleotide exchange factors (GEFs) which promote the exchange of bound GDP for free GTP. Regulated by GTPase activating proteins (GAPs) which increase the GTP hydrolysis activity. Inhibited by GDP dissociation inhibitors (GDIs) which prevent Rab-GDP dissociation. The small GTPases Rab are key regulators of intracellular membrane trafficking, from the formation of transport vesicles to their fusion with membranes. Rabs cycle between an inactive GDP-bound form and an active GTP-bound form that is able to recruit to membranes different sets of downstream effectors directly responsible for vesicle formation, movement, tethering and fusion. The sequence is that of Ras-related protein Rab-3B (RAB3B) from Mesocricetus auratus (Golden hamster).